Here is a 160-residue protein sequence, read N- to C-terminus: Endoribonuclease YbeY (160 aa).

Positions 125, 129, and 135 each coordinate Zn(2+).

This sequence belongs to the endoribonuclease YbeY family. Zn(2+) serves as cofactor.

The protein resides in the cytoplasm. Its function is as follows. Single strand-specific metallo-endoribonuclease involved in late-stage 70S ribosome quality control and in maturation of the 3' terminus of the 16S rRNA. The protein is Endoribonuclease YbeY of Leuconostoc mesenteroides subsp. mesenteroides (strain ATCC 8293 / DSM 20343 / BCRC 11652 / CCM 1803 / JCM 6124 / NCDO 523 / NBRC 100496 / NCIMB 8023 / NCTC 12954 / NRRL B-1118 / 37Y).